A 293-amino-acid polypeptide reads, in one-letter code: Small ribosomal subunit biogenesis GTPase RsgA (293 aa).

The region spanning 63–223 is the CP-type G domain; the sequence is KNWLVRPPIA…VADTPGFSAL (161 aa). GTP contacts are provided by residues 112–115 and 166–174; these read NKMD and GQSGVGKSS. C247, C252, H254, and C260 together coordinate Zn(2+).

Belongs to the TRAFAC class YlqF/YawG GTPase family. RsgA subfamily. In terms of assembly, monomer. Associates with 30S ribosomal subunit, binds 16S rRNA. Requires Zn(2+) as cofactor.

The protein resides in the cytoplasm. Functionally, one of several proteins that assist in the late maturation steps of the functional core of the 30S ribosomal subunit. Helps release RbfA from mature subunits. May play a role in the assembly of ribosomal proteins into the subunit. Circularly permuted GTPase that catalyzes slow GTP hydrolysis, GTPase activity is stimulated by the 30S ribosomal subunit. This Geobacillus sp. (strain WCH70) protein is Small ribosomal subunit biogenesis GTPase RsgA.